A 495-amino-acid chain; its full sequence is Ankyrin repeat domain-containing protein 34A (495 aa).

ANK repeat units follow at residues 4–33 (TEGH…YVNE), 37–72 (QGET…DPNI), 76–106 (LGRT…DPSV), and 110–139 (AGAS…AKGT). Q15 is subject to N5-methylglutamine. Polar residues-rich tracts occupy residues 147-162 (DTSP…YLNS) and 180-191 (VCTSPSEVQLQT). The interval 147–495 (DTSPSGTKKT…SLGGPGEPGR (349 aa)) is disordered. Residues 203 to 213 (AQEEEEKRDVF) are compositionally biased toward basic and acidic residues. Over residues 223–232 (DPSPSEPLPK) the composition is skewed to pro residues. The segment covering 233-242 (PPRHPPKPLK) has biased composition (basic residues). T315 is subject to Phosphothreonine. Positions 375–385 (SVSSPRQSQES) are enriched in polar residues. Residues 462–472 (RTKRKLVRRHS) show a composition bias toward basic residues. Positions 485 to 495 (QSLGGPGEPGR) are enriched in gly residues.

The protein belongs to the ANKRD34 family. Methylated at Gln-15 by N6AMT1.

This Rattus norvegicus (Rat) protein is Ankyrin repeat domain-containing protein 34A (Ankrd34a).